The chain runs to 861 residues: Origin recognition complex subunit 1 (861 aa).

The BAH domain maps to 45-171; sequence IHIQIGQFVL…EKKFRPLSSE (127 aa). The segment at 183 to 233 is disordered; sequence AAKCQKPVRAKSKSAESPSWTPAEHVAKRIESRHSASKSRQTPTHPLTPRA. At S199 the chain carries Phosphoserine. T203 bears the Phosphothreonine mark. A compositionally biased stretch (basic and acidic residues) spans 207–216; that stretch reads HVAKRIESRH. S252, S255, S273, and S287 each carry phosphoserine. The segment at 269–312 is disordered; it reads SEITSPSKRSQPDKLQTLSPALKAPEKTRETGLSYTEDDKKASP. Residues 270–287 are compositionally biased toward polar residues; it reads EITSPSKRSQPDKLQTLS. K326 carries the N6-acetyllysine modification. Phosphothreonine is present on T337. S340 carries the phosphoserine modification. Disordered regions lie at residues 360–382 and 412–476; these read KRDA…IRRK and PAAE…QIRS. Phosphoserine is present on residues S417 and S420. The span at 440–456 shows a compositional bias: low complexity; that stretch reads SRNLRSSLKSSLHTLTK. A compositionally biased stretch (basic residues) spans 457 to 466; it reads VPKKSLKPRT. At S478 the chain carries Phosphoserine. ATP is bound by residues V500 and 534–542; that span reads GVPGTGKTA. A necessary and sufficient for ORC complex assembly region spans residues 501–861; it reads PESLPCREQE…DDVLYALKDE (361 aa). Mg(2+)-binding residues include D620 and E621. ATP contacts are provided by E621, N654, and R720.

This sequence belongs to the ORC1 family. As to quaternary structure, component of ORC, a complex composed of at least 6 subunits: ORC1, ORC2, ORC3, ORC4, ORC5 and ORC6. ORC is regulated in a cell-cycle dependent manner. It is sequentially assembled at the exit from anaphase of mitosis and disassembled as cells enter S phase. Interacts with CDC6 and KAT7/HBO1. Interacts with LRWD1 predominantly during the G1 phase and with less affinity during mitosis, when phosphorylated. Phosphorylated during mitosis.

The protein localises to the nucleus. Its function is as follows. Component of the origin recognition complex (ORC) that binds origins of replication. DNA-binding is ATP-dependent. The DNA sequences that define origins of replication have not been identified yet. ORC is required to assemble the pre-replication complex necessary to initiate DNA replication. This is Origin recognition complex subunit 1 (ORC1) from Homo sapiens (Human).